A 493-amino-acid chain; its full sequence is D-aminoacyl-tRNA deacylase (493 aa).

Over residues 22–37 (DLGDWERRDDPSRPDA) the composition is skewed to basic and acidic residues. Disordered stretches follow at residues 22–44 (DLGDWERRDDPSRPDADGGGTYY) and 441–493 (PEGP…EPSE).

The protein belongs to the DtdA deacylase family. Monomer. Requires Zn(2+) as cofactor.

The catalysed reaction is a D-aminoacyl-tRNA + H2O = a tRNA + a D-alpha-amino acid + H(+). The enzyme catalyses glycyl-tRNA(Ala) + H2O = tRNA(Ala) + glycine + H(+). Its function is as follows. D-aminoacyl-tRNA deacylase with broad substrate specificity. By recycling D-aminoacyl-tRNA to D-amino acids and free tRNA molecules, this enzyme counteracts the toxicity associated with the formation of D-aminoacyl-tRNA entities in vivo. The polypeptide is D-aminoacyl-tRNA deacylase (Halorubrum lacusprofundi (strain ATCC 49239 / DSM 5036 / JCM 8891 / ACAM 34)).